A 226-amino-acid chain; its full sequence is 2-C-methyl-D-erythritol 4-phosphate cytidylyltransferase (226 aa).

The protein belongs to the IspD/TarI cytidylyltransferase family. IspD subfamily.

The catalysed reaction is 2-C-methyl-D-erythritol 4-phosphate + CTP + H(+) = 4-CDP-2-C-methyl-D-erythritol + diphosphate. The protein operates within isoprenoid biosynthesis; isopentenyl diphosphate biosynthesis via DXP pathway; isopentenyl diphosphate from 1-deoxy-D-xylulose 5-phosphate: step 2/6. Functionally, catalyzes the formation of 4-diphosphocytidyl-2-C-methyl-D-erythritol from CTP and 2-C-methyl-D-erythritol 4-phosphate (MEP). The sequence is that of 2-C-methyl-D-erythritol 4-phosphate cytidylyltransferase from Thermosipho africanus (strain TCF52B).